The sequence spans 426 residues: Kelch repeat-containing protein At3g27220 (426 aa).

Residues 18–38 (LMLVLYFTSVLGIGFIAAFLC) traverse the membrane as a helical segment. Kelch repeat units follow at residues 123-170 (LLYV…IVTD), 173-222 (YVYV…IWRG), 224-275 (LHVM…VAND), 276-338 (KLLV…WIIV), and 341-394 (SIVI…FWNG).

The protein resides in the membrane. The protein is Kelch repeat-containing protein At3g27220 of Arabidopsis thaliana (Mouse-ear cress).